The sequence spans 452 residues: MKNIHAIILAAGKGSRMNSSKPKVLQTLSNNTLLGHILSQVKGLCDKVHVVYGFEGNQVQRKINDSNINWVEQTEQLGTGHAVAQAMPHIEDNSISLILYGDVPLIKKSTLADLIHKAQQSGLSLLSVILDNPTGYGRIIRKDKQIQAIVEQKDATNTQLNINEVNTGIMAVHSQLLKQYLSKINSSNAQGELYLTDIIACAITDGQIVSSIISKNKFEIAGVNDKVQLAELERIFQINQATQFMQQGLSLKDPNRFDCRGVFTFGKDCEIDINALIEGEVVLGDNTIIAPNCIIKNSKIGNCISILSNCVIEDCVIEDGATIGPFARIRPNTHIKTYAKIGNFVEVKKSIIGENTNVSHLSYIGDAIIGKNVNISAGVITCNYDGINKHQTIIGDGAFIGSDSQLVAPIKIGKNATIGAGSTITKAAPDNQLSLSRTKQISLKNWQRPTKK.

The interval 1-226 (MKNIHAIILA…KFEIAGVNDK (226 aa)) is pyrophosphorylase. UDP-N-acetyl-alpha-D-glucosamine contacts are provided by residues 9-12 (LAAG), Lys23, Gln73, 78-79 (GT), 100-102 (YGD), Gly137, Glu151, Asn166, and Asn224. Asp102 is a binding site for Mg(2+). Position 224 (Asn224) interacts with Mg(2+). Residues 227-247 (VQLAELERIFQINQATQFMQQ) form a linker region. Positions 248 to 452 (GLSLKDPNRF…LKNWQRPTKK (205 aa)) are N-acetyltransferase. Positions 330 and 348 each coordinate UDP-N-acetyl-alpha-D-glucosamine. Catalysis depends on His360, which acts as the Proton acceptor. Residues Tyr363 and Asn374 each contribute to the UDP-N-acetyl-alpha-D-glucosamine site. Residues Ala377, 383–384 (NY), Ser402, Ala420, and Arg437 contribute to the acetyl-CoA site.

This sequence in the N-terminal section; belongs to the N-acetylglucosamine-1-phosphate uridyltransferase family. In the C-terminal section; belongs to the transferase hexapeptide repeat family. As to quaternary structure, homotrimer. The cofactor is Mg(2+).

Its subcellular location is the cytoplasm. The catalysed reaction is alpha-D-glucosamine 1-phosphate + acetyl-CoA = N-acetyl-alpha-D-glucosamine 1-phosphate + CoA + H(+). It carries out the reaction N-acetyl-alpha-D-glucosamine 1-phosphate + UTP + H(+) = UDP-N-acetyl-alpha-D-glucosamine + diphosphate. Its pathway is nucleotide-sugar biosynthesis; UDP-N-acetyl-alpha-D-glucosamine biosynthesis; N-acetyl-alpha-D-glucosamine 1-phosphate from alpha-D-glucosamine 6-phosphate (route II): step 2/2. It participates in nucleotide-sugar biosynthesis; UDP-N-acetyl-alpha-D-glucosamine biosynthesis; UDP-N-acetyl-alpha-D-glucosamine from N-acetyl-alpha-D-glucosamine 1-phosphate: step 1/1. It functions in the pathway bacterial outer membrane biogenesis; LPS lipid A biosynthesis. Its function is as follows. Catalyzes the last two sequential reactions in the de novo biosynthetic pathway for UDP-N-acetylglucosamine (UDP-GlcNAc). The C-terminal domain catalyzes the transfer of acetyl group from acetyl coenzyme A to glucosamine-1-phosphate (GlcN-1-P) to produce N-acetylglucosamine-1-phosphate (GlcNAc-1-P), which is converted into UDP-GlcNAc by the transfer of uridine 5-monophosphate (from uridine 5-triphosphate), a reaction catalyzed by the N-terminal domain. In Ruthia magnifica subsp. Calyptogena magnifica, this protein is Bifunctional protein GlmU.